Here is a 4592-residue protein sequence, read N- to C-terminus: Intermembrane lipid transfer protein vps13D (4592 aa).

The Chorein N-terminal domain occupies 3–102; it reads FESVVAEVID…SSTNVSSNYS (100 aa). 13 disordered regions span residues 95 to 142, 157 to 199, 286 to 307, 445 to 529, 574 to 605, 826 to 861, 1040 to 1083, 1219 to 1249, 1655 to 1717, 1855 to 1886, 1971 to 2001, 2025 to 2056, and 2245 to 2270; these read TNVS…TASQ, LDKK…IDSQ, STTSSNNNNNNNNNNTTSSSSS, KKDD…IKGI, SNSTTTNNSNNNSSSSPNILATSPSNNSLSPM, NYNNQSSSSSSSSQPPPPKPTEETSTTNKPKKQQGI, TTSP…KRQW, YFKNKRKEENEQNEGNTEDDEQEEEEQEKKP, QQQE…QQSN, SNNNNDNNNDNNNSNNSNNNNNTSNGSGNSLF, TSSLDNTSISTTTTTTTTTTTTTTTTTTTTS, PLINDNSNKSPTSKSSSSKSSSSKSSKKEQQQ, and NNNNNNNNNNNNNNNNNNNNNTNIIN. Low complexity-rich tracts occupy residues 117-139 and 172-199; these read SSSNNNNNNNNDSSSSSSNTTST and KSTNTTTNNNGINNSNDKNKNNNNIDSQ. A coiled-coil region spans residues 437–517; the sequence is KNATIKLNKK…KKKEEKGKSK (81 aa). The segment covering 445-457 has biased composition (basic and acidic residues); the sequence is KKDDKKDDKKDDI. Residues 458–474 show a composition bias toward low complexity; it reads NSSSSSIGSSNSSNNTP. Basic and acidic residues predominate over residues 475–529; that stretch reads TKDKNKEKEKDKEKEKEKEKKKEKEKLKLEEKKKKKEEKGKSKSKDSKKNKIKGI. A compositionally biased stretch (low complexity) spans 574-591; that stretch reads SNSTTTNNSNNNSSSSPN. The span at 592–603 shows a compositional bias: polar residues; the sequence is ILATSPSNNSLS. Low complexity predominate over residues 829 to 838; the sequence is NQSSSSSSSS. A compositionally biased stretch (polar residues) spans 1040–1059; the sequence is TTSPTFNSLNNKPSTLQNNH. Over residues 1064-1076 the composition is skewed to low complexity; sequence NGNSSNNNNTDSP. Positions 1234–1244 are enriched in acidic residues; sequence NTEDDEQEEEE. Composition is skewed to low complexity over residues 1669–1689 and 1702–1715; these read KSINSKPPSPKLSLMSPLRKS and QQQQQQQQQQQQQQ. A compositionally biased stretch (low complexity) spans 2037–2048; the sequence is SKSSSSKSSSSK. The stretch at 2321-2354 is one TPR 1 repeat; sequence TLQINDLGANIISIGNKSTSIKCFLRSIRLSDSR. Disordered stretches follow at residues 2456–2489, 2862–2882, 3006–3035, 3106–3129, 3356–3384, 3560–3580, and 3630–3679; these read KTNNNNNNNNNNYNNTNSNNNNNQEEEEKDSIST, AVSTSNNPNGSGYNNSNNNNG, GEQKGKKKSTSTSTSPTLSSQPSSSSSSSS, NSSGYNSSSPSPSSSSSPSSSSSN, KLPTSPQTSSSSSPPPATTTTSTTTKRTT, NSLKIEQGRKSKKQQQQHRHN, and STNH…SKLK. Low complexity-rich tracts occupy residues 2458 to 2478, 2864 to 2880, and 3015 to 3035; these read NNNNNNNNNNYNNTNSNNNNN, STSNNPNGSGYNNSNNN, and TSTSTSPTLSSQPSSSSSSSS. Over residues 3358-3384 the composition is skewed to low complexity; the sequence is PTSPQTSSSSSPPPATTTTSTTTKRTT. Over residues 3569 to 3580 the composition is skewed to basic residues; the sequence is KSKKQQQQHRHN. Over residues 3640–3679 the composition is skewed to low complexity; it reads SSTFNNSSNDNINNGNSNNNTSNSLSPPSSSSSINLSKLK. Residues 3789–3822 form a TPR 2 repeat; it reads EVPKPYLGRVDIKDNDTHTSIHFYDQDTEYSPFR. 2 stretches are compositionally biased toward low complexity: residues 3872–3894 and 4111–4135; these read TTTTTTTTNSTNDINNDNNNNNN and QQLQQNPQQQQPQQQNNEIQNNPIN. Disordered regions lie at residues 3872–3897 and 4105–4135; these read TTTTTTTTNSTNDINNDNNNNNNQYI and KKHKKNQQLQQNPQQQQPQQQNNEIQNNPIN.

The protein resides in the membrane. Its function is as follows. Mediates the transfer of lipids between membranes at organelle contact sites. The sequence is that of Intermembrane lipid transfer protein vps13D (vps13D) from Dictyostelium discoideum (Social amoeba).